The primary structure comprises 138 residues: ER-derived vesicles protein ERV14 (138 aa).

The Cytoplasmic portion of the chain corresponds to Gly2–Phe6. The helical transmembrane segment at Ile7 to Tyr27 threads the bilayer. Residues Ala28 to Ala52 lie on the Extracellular side of the membrane. A helical transmembrane segment spans residues Ala53–Leu73. Residues Asn74 to Lys111 are Cytoplasmic-facing. The chain crosses the membrane as a helical span at residues Leu112–Ala132. At Glu133 to Phe138 the chain is on the extracellular side.

This sequence belongs to the cornichon family.

It is found in the endoplasmic reticulum membrane. Its subcellular location is the golgi apparatus membrane. In terms of biological role, could regulate export of the bud site and axial growth sites selection protein AXL2 and possibly other secretory proteins from the endoplasmic reticulum in COPII-coated vesicles. Seems to be required for axial budding pattern in haploid cells. In Saccharomyces cerevisiae (strain ATCC 204508 / S288c) (Baker's yeast), this protein is ER-derived vesicles protein ERV14 (ERV14).